We begin with the raw amino-acid sequence, 22 residues long: Recombination and repair protein (22 aa).

It belongs to the RecA family.

Its function is as follows. Important in genetic recombination, DNA repair, and replication. Possesses pairing and strand-transfer activity. Interacts with dda and gene 32 proteins. This is Recombination and repair protein (UVSX) from Escherichia coli (Bacteriophage T2).